The chain runs to 346 residues: Prepilin peptidase EppA (346 aa).

Transmembrane regions (helical) follow at residues 1 to 21 (MFGF…LILT), 31 to 51 (IIPH…GYYF), 56 to 76 (AITS…GMGG), 77 to 97 (GDVK…IYFV), 101 to 121 (ISIL…TKIL), 128 to 148 (IIPS…ITEI), 149 to 169 (YSIG…IFIS), 182 to 202 (LGYI…AYFV), 206 to 226 (VLIS…VIYA), and 321 to 341 (PFVP…MGVI).

It belongs to the peptidase A24 family.

It localises to the cell membrane. Its function is as follows. Peptidase that processes the N-terminus of prepilins. Specifically cleaves proteins with a class III (type IV pilin-like) signal sequence, such as the major structural pilin EpdE and the minor pilins EpdA, EpdC and EpdD. Is not able to cleave the preflagellin subunit FlaB2. This is Prepilin peptidase EppA from Methanococcus maripaludis (strain DSM 14266 / JCM 13030 / NBRC 101832 / S2 / LL).